A 359-amino-acid polypeptide reads, in one-letter code: Ribosomal RNA small subunit methyltransferase H (359 aa).

Residues 39-41, aspartate 58, phenylalanine 87, aspartate 108, and glutamine 115 each bind S-adenosyl-L-methionine; that span reads AGH. Positions 339 to 359 are disordered; it reads IQGSASPGRAKNTARIRTRRG. Over residues 350-359 the composition is skewed to basic residues; it reads NTARIRTRRG.

Belongs to the methyltransferase superfamily. RsmH family.

It is found in the cytoplasm. The enzyme catalyses cytidine(1402) in 16S rRNA + S-adenosyl-L-methionine = N(4)-methylcytidine(1402) in 16S rRNA + S-adenosyl-L-homocysteine + H(+). Specifically methylates the N4 position of cytidine in position 1402 (C1402) of 16S rRNA. This is Ribosomal RNA small subunit methyltransferase H from Bifidobacterium longum subsp. infantis (strain ATCC 15697 / DSM 20088 / JCM 1222 / NCTC 11817 / S12).